Consider the following 161-residue polypeptide: SsrA-binding protein (161 aa).

Positions 140-161 are disordered; sequence KRESIKERDWKRDKQRLLKDRG.

This sequence belongs to the SmpB family.

It localises to the cytoplasm. Its function is as follows. Required for rescue of stalled ribosomes mediated by trans-translation. Binds to transfer-messenger RNA (tmRNA), required for stable association of tmRNA with ribosomes. tmRNA and SmpB together mimic tRNA shape, replacing the anticodon stem-loop with SmpB. tmRNA is encoded by the ssrA gene; the 2 termini fold to resemble tRNA(Ala) and it encodes a 'tag peptide', a short internal open reading frame. During trans-translation Ala-aminoacylated tmRNA acts like a tRNA, entering the A-site of stalled ribosomes, displacing the stalled mRNA. The ribosome then switches to translate the ORF on the tmRNA; the nascent peptide is terminated with the 'tag peptide' encoded by the tmRNA and targeted for degradation. The ribosome is freed to recommence translation, which seems to be the essential function of trans-translation. This chain is SsrA-binding protein, found in Sphingopyxis alaskensis (strain DSM 13593 / LMG 18877 / RB2256) (Sphingomonas alaskensis).